The sequence spans 148 residues: Snaclec flavocetin-A subunit beta (148 aa).

The signal sequence occupies residues Met-1–Ala-23. Disulfide bonds link Cys-27/Cys-38, Cys-55/Cys-144, and Cys-121/Cys-136. Positions Tyr-34 to Lys-145 constitute a C-type lectin domain.

The protein belongs to the snaclec family. As to quaternary structure, tetramer of heterodimers of alpha and beta subunits (alphabeta)(4); disulfide-linked. In terms of tissue distribution, expressed by the venom gland.

It localises to the secreted. Functionally, strong platelet aggregation inhibitor. Binds specifically to platelet glycoprotein Ibalpha (GP1BA) with high affinity and inhibits vWF-dependent platelet aggregation. Has also been observed to induce small agglutinates in washed platelets by binding to GPIb. In Protobothrops flavoviridis (Habu), this protein is Snaclec flavocetin-A subunit beta.